Consider the following 374-residue polypeptide: tRNA-specific 2-thiouridylase MnmA (374 aa).

ATP contacts are provided by residues 12–19 (GMSGGVDS) and Met38. Positions 98 to 100 (NPD) are interaction with target base in tRNA. Cys103 serves as the catalytic Nucleophile. A disulfide bond links Cys103 and Cys200. Gly127 is an ATP binding site. The interval 150–152 (KDQ) is interaction with tRNA. Catalysis depends on Cys200, which acts as the Cysteine persulfide intermediate. Positions 311 to 312 (RY) are interaction with tRNA.

Belongs to the MnmA/TRMU family.

The protein resides in the cytoplasm. It catalyses the reaction S-sulfanyl-L-cysteinyl-[protein] + uridine(34) in tRNA + AH2 + ATP = 2-thiouridine(34) in tRNA + L-cysteinyl-[protein] + A + AMP + diphosphate + H(+). Its function is as follows. Catalyzes the 2-thiolation of uridine at the wobble position (U34) of tRNA, leading to the formation of s(2)U34. The sequence is that of tRNA-specific 2-thiouridylase MnmA from Lactiplantibacillus plantarum (strain ATCC BAA-793 / NCIMB 8826 / WCFS1) (Lactobacillus plantarum).